Here is a 549-residue protein sequence, read N- to C-terminus: MAKFVFITGGVVSSIGKGIVAASLGRLLKSRGYNVSILKLDPYLNVDPGTMSPFQHGEVFVTEDGAETDLDLGHYERFTDTAMSRLNSVTTGSIYQSVINKERRGDYNGGTVQVIPHITGEIRERIHRVASNSNADVVITEIGGTVGDIESLPFLEAIREFREDVGRNDLAYIHVTLLPFIGTSGELKTKPTQHSVKELRSIGIQPDVLICRSDRDISDDLKRKIGGFCGVPTRAVIPSLDADSIYAVPLILEQEGLCREVLDVLNLTDHDSDMAAWEQLVNKLRNPGPSVKIALVGKYVQLNDAYLSVVEALQHACIAQDASLDLHWVCAEQIEADGADTLLRGMDAVVVPGGFGNRGVDGKIAAIRCAREQRVPFLGLCLGMQTAVIEWARNQAGLTGATSAELDENTPHPVIHLLPEQQDVVDLGGTMRLGVYPCRIAPGTLAQRLYGDEVVYERHRHRYEFNNSYRNLFLESGYVVSGTSPDGRLVELIELKGHPFFTACQYHPEFLSRPGQPHPLFRGLIEAAQQRLPDSPAEALRQQGDIAIP.

The amidoligase domain stretch occupies residues 1–267 (MAKFVFITGG…CREVLDVLNL (267 aa)). Ser-13 is a CTP binding site. A UTP-binding site is contributed by Ser-13. Residues 14–19 (SIGKGI) and Asp-71 each bind ATP. Residues Asp-71 and Glu-141 each contribute to the Mg(2+) site. CTP contacts are provided by residues 148-150 (DIE), 188-193 (KTKPTQ), and Lys-224. UTP is bound by residues 188-193 (KTKPTQ) and Lys-224. Positions 292–534 (KIALVGKYVQ…IEAAQQRLPD (243 aa)) constitute a Glutamine amidotransferase type-1 domain. Position 354 (Gly-354) interacts with L-glutamine. Cys-381 (nucleophile; for glutamine hydrolysis) is an active-site residue. Residues 382 to 385 (LGMQ), Glu-405, and Arg-462 each bind L-glutamine. Residues His-507 and Glu-509 contribute to the active site.

It belongs to the CTP synthase family. In terms of assembly, homotetramer.

It catalyses the reaction UTP + L-glutamine + ATP + H2O = CTP + L-glutamate + ADP + phosphate + 2 H(+). It carries out the reaction L-glutamine + H2O = L-glutamate + NH4(+). The catalysed reaction is UTP + NH4(+) + ATP = CTP + ADP + phosphate + 2 H(+). It functions in the pathway pyrimidine metabolism; CTP biosynthesis via de novo pathway; CTP from UDP: step 2/2. Its activity is regulated as follows. Allosterically activated by GTP, when glutamine is the substrate; GTP has no effect on the reaction when ammonia is the substrate. The allosteric effector GTP functions by stabilizing the protein conformation that binds the tetrahedral intermediate(s) formed during glutamine hydrolysis. Inhibited by the product CTP, via allosteric rather than competitive inhibition. In terms of biological role, catalyzes the ATP-dependent amination of UTP to CTP with either L-glutamine or ammonia as the source of nitrogen. Regulates intracellular CTP levels through interactions with the four ribonucleotide triphosphates. In Synechococcus sp. (strain CC9605), this protein is CTP synthase.